Reading from the N-terminus, the 259-residue chain is Phosphate import ATP-binding protein PstB (259 aa).

The 242-residue stretch at 13–254 folds into the ABC transporter domain; sequence IAVKNLNFFY…PTRKETEDYI (242 aa). 45–52 is an ATP binding site; the sequence is GPSGCGKS.

The protein belongs to the ABC transporter superfamily. Phosphate importer (TC 3.A.1.7) family. As to quaternary structure, the complex is composed of two ATP-binding proteins (PstB), two transmembrane proteins (PstC and PstA) and a solute-binding protein (PstS).

It is found in the cell inner membrane. It catalyses the reaction phosphate(out) + ATP + H2O = ADP + 2 phosphate(in) + H(+). In terms of biological role, part of the ABC transporter complex PstSACB involved in phosphate import. Responsible for energy coupling to the transport system. The sequence is that of Phosphate import ATP-binding protein PstB from Albidiferax ferrireducens (strain ATCC BAA-621 / DSM 15236 / T118) (Rhodoferax ferrireducens).